A 661-amino-acid chain; its full sequence is MKFTRTLVLASTSLLATVATSQAQEVKRDTKKQGEVVLKPITIISHGKDNIEATGGTVLTYKDIEKLQPANVSELFSRQSSIAVSGGGGPSKRIHVLGMEQSNLAVSVDGVPQTATSWHHTGSNVIDPAFLKRVEVEAGAAAADSGFGAAAGAIRYETVNALDLLEPGKTFGARIIGSYGTNGRGFSGSTAAYGLKDGFDWLLMLHGTSGHNYKNGDGTEILGTEPAARNILGKAGYEFDGNRIDIGYERSRDKADRLIKMNMGLPGDTEYPLEVARDSVNIKYTRTDATDMWDPEVQFYYNRNDYWRNDYQNRTNGNMILKEDLYGGKLQNTFTIDYGKITAGIDFGKHDYNTDNYGHNDRRYRKFNTQQVGAFTQGRFEFDNGFSLSTGARYDYSRFADWNDEVFSDSGASVNGTLSYKFNEHIEVFAGASRTWLGYVLGDYGYVHARNNAFYTDPTFSPGRARNYKAGVNFGGADWSAGITLFDTRIAGLPNYDSQKLGNDPEEYRSRGFTLNARYIWNYTTIGATFTKAKVTAGDDPVLPNSGSFMPIGDMATLFIDQEIPDYNMKVGATLAWAGRISDEAATAANFYDQPAYTVVNAYAEWNPPAVKNMTLRVGVENLFNENYYERTSFAPSQNRGGIDAVWAPGRTFTFQTAFKF.

The first 23 residues, 1–23 (MKFTRTLVLASTSLLATVATSQA), serve as a signal peptide directing secretion. Positions 48–159 (KDNIEATGGT…AAGAIRYETV (112 aa)) constitute a TBDR plug domain. The 492-residue stretch at 170–661 (TFGARIIGSY…TFTFQTAFKF (492 aa)) folds into the TBDR beta-barrel domain.

The protein belongs to the TonB-dependent receptor family.

It localises to the cell outer membrane. In terms of biological role, heme transporter. This is Heme transporter BhuA (bhuA) from Brucella abortus biovar 1 (strain 9-941).